The sequence spans 538 residues: MKMRRYKLFLMFCMAGLCLISFLHFFKTLSYVTFPRELASLSPNLISSFFWNNAPVTPQASPEPGDPDLLRTPLYSHSPLLQPLSPSKATEELHRVDFVLPEDTTEYFVRTKAGGVCFKPGTRMLEKPSPGRTEEKTKVAEGSSVRGPARRPMRHVLSARERLGGRGTRRKWVECVCLPGWHGPSCGVPTVVQYSNLPTKERLVPREVPRRVINAININHEFDLLDVRFHELGDVVDAFVVCESNFTAYGEPRPLKFREMLTNGTFEYIRHKVLYVFLDHFPPGGRQDGWIADDYLRTFLTQDGVSRLRNLRPDDVFIIDDADEIPARDGVLFLKLYDGWTEPFAFHMRKSLYGFFWKQPGTLEVVSGCTIDMLQAVYGLDGIRLRRRQYYTMPNFRQYENRTGHILVQWSLGSPLHFAGWHCSWCFTPEGIYFKLVSAQNGDFPRWGDYEDKRDLNYIRSLIRTGGWFDGTQQEYPPADPSEHMYAPKYLLKNYDQFRYLLENPYREPKSTVEGGRRNQGSDGRSSAVRGKLDTTEG.

At 1–7 (MKMRRYK) the chain is on the cytoplasmic side. A helical; Signal-anchor for type II membrane protein membrane pass occupies residues 8 to 23 (LFLMFCMAGLCLISFL). Over 24–538 (HFFKTLSYVT…VRGKLDTTEG (515 aa)) the chain is Lumenal. A disordered region spans residues 121 to 151 (GTRMLEKPSPGRTEEKTKVAEGSSVRGPARR). N-linked (GlcNAc...) asparagine glycosylation is found at N245, N263, and N401. Residues 509–538 (PKSTVEGGRRNQGSDGRSSAVRGKLDTTEG) are disordered.

It belongs to the glycosyltransferase 17 family. In terms of assembly, interacts with MGAT4D.

Its subcellular location is the golgi apparatus membrane. The enzyme catalyses N(4)-{beta-D-GlcNAc-(1-&gt;2)-alpha-D-Man-(1-&gt;3)-[beta-D-GlcNAc-(1-&gt;2)-alpha-D-Man-(1-&gt;6)]-beta-D-Man-(1-&gt;4)-beta-D-GlcNAc-(1-&gt;4)-beta-D-GlcNAc}-L-asparaginyl-[protein] + UDP-N-acetyl-alpha-D-glucosamine = N(4)-{beta-D-GlcNAc-(1-&gt;2)-alpha-D-Man-(1-&gt;3)-[beta-D-GlcNAc-(1-&gt;4)]-[beta-D-GlcNAc-(1-&gt;2)-alpha-D-Man-(1-&gt;6)]-beta-D-Man-(1-&gt;4)-beta-D-GlcNAc-(1-&gt;4)-beta-D-GlcNAc}-L-asparaginyl-[protein] + UDP + H(+). It participates in protein modification; protein glycosylation. It is involved in the regulation of the biosynthesis and biological function of glycoprotein oligosaccharides. Catalyzes the addition of N-acetylglucosamine in beta 1-4 linkage to the beta-linked mannose of the trimannosyl core of N-linked sugar chains, called bisecting N-acetylglucosamine (GlcNAc). It is one of the most important enzymes involved in the regulation of the biosynthesis of glycoprotein oligosaccharides. The addition of this bisecting GlcNAc residue alters not only the composition, but also the conformation of the N-glycan. The introduction of the bisecting GlcNAc residue results in the suppression of further processing and elongation of N-glycans, precluding the formation of beta-1,6 GlcNAc branching, catalyzed by MGAT5 since it is unable to use the bisected oligosaccharide as a substrate. Addition of bisecting N-acetylglucosamine to CDH1/E-cadherin modulates CDH1 cell membrane location. Inhibits NeuAc-alpha-2,3-Gal-beta-1,4-GlcNAc- formation which modulates sialylation levels and plays a role in cell migration regulation. In brain, addition of bisecting N-acetylglucosamine to BACE1 blocks its lysosomal targeting in response to oxidative stress and further degradation which increases its location to early endosome and the APP cleavage. The polypeptide is Beta-1,4-mannosyl-glycoprotein 4-beta-N-acetylglucosaminyltransferase (Mgat3) (Rattus norvegicus (Rat)).